Here is a 253-residue protein sequence, read N- to C-terminus: Triosephosphate isomerase (253 aa).

A substrate-binding site is contributed by 13–15 (NWK). His-100 (electrophile) is an active-site residue. Glu-169 acts as the Proton acceptor in catalysis. Substrate-binding positions include Gly-175, Ser-208, and 229 to 230 (GG).

This sequence belongs to the triosephosphate isomerase family. In terms of assembly, homodimer.

Its subcellular location is the cytoplasm. The enzyme catalyses D-glyceraldehyde 3-phosphate = dihydroxyacetone phosphate. Its pathway is carbohydrate biosynthesis; gluconeogenesis. The protein operates within carbohydrate degradation; glycolysis; D-glyceraldehyde 3-phosphate from glycerone phosphate: step 1/1. Functionally, involved in the gluconeogenesis. Catalyzes stereospecifically the conversion of dihydroxyacetone phosphate (DHAP) to D-glyceraldehyde-3-phosphate (G3P). The sequence is that of Triosephosphate isomerase from Synechococcus sp. (strain RCC307).